The primary structure comprises 97 residues: Late transcription unit B protein (97 aa).

Residues 24 to 45 (SIEGETKKEHKHHYSTASKEKE) are disordered.

In Chlamydia trachomatis serovar D (strain ATCC VR-885 / DSM 19411 / UW-3/Cx), this protein is Late transcription unit B protein (ltuB).